Consider the following 206-residue polypeptide: GTP cyclohydrolase 1 (206 aa).

Zn(2+) is bound by residues C95, H98, and C166.

This sequence belongs to the GTP cyclohydrolase I family. In terms of assembly, toroid-shaped homodecamer, composed of two pentamers of five dimers.

It carries out the reaction GTP + H2O = 7,8-dihydroneopterin 3'-triphosphate + formate + H(+). It participates in cofactor biosynthesis; 7,8-dihydroneopterin triphosphate biosynthesis; 7,8-dihydroneopterin triphosphate from GTP: step 1/1. This is GTP cyclohydrolase 1 from Bartonella henselae (strain ATCC 49882 / DSM 28221 / CCUG 30454 / Houston 1) (Rochalimaea henselae).